The primary structure comprises 368 residues: 4-hydroxy-3-methylbut-2-en-1-yl diphosphate synthase (flavodoxin) (368 aa).

Residues cysteine 271, cysteine 274, cysteine 306, and glutamate 313 each contribute to the [4Fe-4S] cluster site.

This sequence belongs to the IspG family. Requires [4Fe-4S] cluster as cofactor.

It catalyses the reaction (2E)-4-hydroxy-3-methylbut-2-enyl diphosphate + oxidized [flavodoxin] + H2O + 2 H(+) = 2-C-methyl-D-erythritol 2,4-cyclic diphosphate + reduced [flavodoxin]. It functions in the pathway isoprenoid biosynthesis; isopentenyl diphosphate biosynthesis via DXP pathway; isopentenyl diphosphate from 1-deoxy-D-xylulose 5-phosphate: step 5/6. In terms of biological role, converts 2C-methyl-D-erythritol 2,4-cyclodiphosphate (ME-2,4cPP) into 1-hydroxy-2-methyl-2-(E)-butenyl 4-diphosphate. The chain is 4-hydroxy-3-methylbut-2-en-1-yl diphosphate synthase (flavodoxin) from Haemophilus influenzae (strain ATCC 51907 / DSM 11121 / KW20 / Rd).